The following is a 1048-amino-acid chain: Probable inactive receptor kinase At5g10020 (1048 aa).

Positions M1 to A21 are cleaved as a signal peptide. 18 LRR repeats span residues R100–G120, S124–L146, S148–N169, Q172–L194, N196–N217, T224–G246, N250–P272, S273–Q294, P298–S319, T320–C342, T365–F387, R389–S411, Q412–T433, S436–R457, Q469–M491, K493–S516, G517–Q539, and M540–S560. The helical transmembrane segment at I602–Y622 threads the bilayer. Positions E696–F733 are disordered. Positions S716–F733 are enriched in low complexity. S744 is modified (phosphoserine). Positions R768–S1045 constitute a Protein kinase domain. ATP is bound by residues L774–L782 and K796.

Belongs to the protein kinase superfamily.

Its subcellular location is the membrane. The chain is Probable inactive receptor kinase At5g10020 from Arabidopsis thaliana (Mouse-ear cress).